A 665-amino-acid polypeptide reads, in one-letter code: Sodium-dependent phosphate transporter 1-B (665 aa).

6 consecutive transmembrane segments (helical) span residues 26-46 (YMWL…SVGA), 67-87 (ACIL…AKVS), 107-127 (LMAG…AASF), 163-183 (IVAS…VLFY), 202-222 (ALPF…MFTG), and 235-255 (GVLL…WFAV). Disordered stretches follow at residues 294–345 (VPEE…APKT) and 423–442 (ESEF…AQER). Positions 296 to 306 (EESSVLSSSTP) are enriched in low complexity. The span at 329–338 (ADQKDCKESD) shows a compositional bias: basic and acidic residues. 4 helical membrane passes run 499 to 519 (VSML…FAHG), 548 to 568 (TPIW…WVWG), 588 to 608 (FSIE…GLPV), and 638 to 658 (IFMA…AIMA).

This sequence belongs to the inorganic phosphate transporter (PiT) (TC 2.A.20) family.

It localises to the membrane. In terms of biological role, sodium-phosphate symporter which plays a fundamental housekeeping role in phosphate transport. The polypeptide is Sodium-dependent phosphate transporter 1-B (slc20a1b) (Danio rerio (Zebrafish)).